A 172-amino-acid chain; its full sequence is Large ribosomal subunit protein uL10 (172 aa).

The protein belongs to the universal ribosomal protein uL10 family. Part of the ribosomal stalk of the 50S ribosomal subunit. The N-terminus interacts with L11 and the large rRNA to form the base of the stalk. The C-terminus forms an elongated spine to which L12 dimers bind in a sequential fashion forming a multimeric L10(L12)X complex.

Functionally, forms part of the ribosomal stalk, playing a central role in the interaction of the ribosome with GTP-bound translation factors. The sequence is that of Large ribosomal subunit protein uL10 (rplJ) from Liberibacter africanus (Citrus greening disease).